Reading from the N-terminus, the 366-residue chain is Cobalt-precorrin-5B C(1)-methyltransferase (366 aa).

This sequence belongs to the CbiD family.

It carries out the reaction Co-precorrin-5B + S-adenosyl-L-methionine = Co-precorrin-6A + S-adenosyl-L-homocysteine. The protein operates within cofactor biosynthesis; adenosylcobalamin biosynthesis; cob(II)yrinate a,c-diamide from sirohydrochlorin (anaerobic route): step 6/10. Its function is as follows. Catalyzes the methylation of C-1 in cobalt-precorrin-5B to form cobalt-precorrin-6A. The sequence is that of Cobalt-precorrin-5B C(1)-methyltransferase from Methanococcus maripaludis (strain C7 / ATCC BAA-1331).